The following is a 290-amino-acid chain: UPF0761 membrane protein YihY (290 aa).

6 consecutive transmembrane segments (helical) span residues 44-64 (LLSLVPLVAVVFALFAAFPMF), 104-124 (VGACGLIVTALLLMYSIDSAL), 140-160 (FAVYWMILTLGPLLAGASLAI), 183-203 (IFPLLLSWISFWLLYSIVPTI), 210-230 (AIVGAFVAALLFEAGKKGFAL), and 244-264 (VLAVIPILFVWVYWTWCIVLL).

Belongs to the UPF0761 family.

The protein localises to the cell inner membrane. The chain is UPF0761 membrane protein YihY from Escherichia coli O127:H6 (strain E2348/69 / EPEC).